We begin with the raw amino-acid sequence, 257 residues long: Phycoerythrobilin:ferredoxin oxidoreductase (257 aa).

It belongs to the HY2 family.

It catalyses the reaction (3Z)-phycoerythrobilin + oxidized 2[4Fe-4S]-[ferredoxin] = 15,16-dihydrobiliverdin + reduced 2[4Fe-4S]-[ferredoxin] + 2 H(+). Catalyzes the two-electron reduction of the C2 and C3(1) diene system of 15,16-dihydrobiliverdin. This Synechococcus sp. (strain CC9902) protein is Phycoerythrobilin:ferredoxin oxidoreductase.